A 260-amino-acid polypeptide reads, in one-letter code: Exosome complex component Rrp4 (260 aa).

The 70-residue stretch at 59 to 128 (NDVVIGVVIV…SSMKIELALR (70 aa)) folds into the S1 motif domain. The KH domain maps to 136 to 194 (RTGQIVEVEPVKVPRVIGHGGSMISMLKKETNCSIFVGQNGRIWIDGKDEDIELLSKAL).

This sequence belongs to the RRP4 family. Component of the archaeal exosome complex. Forms a trimer of Rrp4 and/or Csl4 subunits. The trimer associates with a hexameric ring-like arrangement composed of 3 Rrp41-Rrp42 heterodimers.

Its subcellular location is the cytoplasm. Functionally, non-catalytic component of the exosome, which is a complex involved in RNA degradation. Increases the RNA binding and the efficiency of RNA degradation. Confers strong poly(A) specificity to the exosome. The chain is Exosome complex component Rrp4 from Methanosarcina mazei (strain ATCC BAA-159 / DSM 3647 / Goe1 / Go1 / JCM 11833 / OCM 88) (Methanosarcina frisia).